The primary structure comprises 196 residues: Adenylate kinase (196 aa).

9-17 (GIPGVGKST) provides a ligand contact to ATP.

Belongs to the archaeal adenylate kinase family.

The protein resides in the cytoplasm. The catalysed reaction is AMP + ATP = 2 ADP. The polypeptide is Adenylate kinase (Pyrococcus furiosus (strain ATCC 43587 / DSM 3638 / JCM 8422 / Vc1)).